The sequence spans 374 residues: Chaperone protein DnaJ (374 aa).

The J domain occupies 5–70 (DYYEVLGVAR…DKRARYDRFG (66 aa)). The CR-type zinc finger occupies 135–213 (GDEVTLRLPK…CKGSGILQQV (79 aa)). Residues cysteine 148, cysteine 151, cysteine 165, cysteine 168, cysteine 187, cysteine 190, cysteine 201, and cysteine 204 each coordinate Zn(2+). CXXCXGXG motif repeat units lie at residues 148 to 155 (CDECNGSG), 165 to 172 (CRHCGGNG), 187 to 194 (CPVCRGEG), and 201 to 208 (CPKCKGSG).

It belongs to the DnaJ family. As to quaternary structure, homodimer. Zn(2+) is required as a cofactor.

Its subcellular location is the cytoplasm. In terms of biological role, participates actively in the response to hyperosmotic and heat shock by preventing the aggregation of stress-denatured proteins and by disaggregating proteins, also in an autonomous, DnaK-independent fashion. Unfolded proteins bind initially to DnaJ; upon interaction with the DnaJ-bound protein, DnaK hydrolyzes its bound ATP, resulting in the formation of a stable complex. GrpE releases ADP from DnaK; ATP binding to DnaK triggers the release of the substrate protein, thus completing the reaction cycle. Several rounds of ATP-dependent interactions between DnaJ, DnaK and GrpE are required for fully efficient folding. Also involved, together with DnaK and GrpE, in the DNA replication of plasmids through activation of initiation proteins. In Nitratidesulfovibrio vulgaris (strain DSM 19637 / Miyazaki F) (Desulfovibrio vulgaris), this protein is Chaperone protein DnaJ.